Here is a 578-residue protein sequence, read N- to C-terminus: PTS system fructose-specific EIIB'BC component (578 aa).

PTS EIIB type-2 domains lie at 1–99 (MSKI…EALA) and 119–214 (VVAI…AALA). The active-site Phosphocysteine intermediate; for EIIB activity is the Cys125. Cys125 is subject to Phosphocysteine; by EIIA. Residues 241-576 (PYMHLLTGVS…KKPIPAEERA (336 aa)) enclose the PTS EIIC type-2 domain. Helical transmembrane passes span 251–271 (YMLPLVVAGGLLIALSFVFGI), 284–304 (LMAIGGGAAFKLMVPVLAGFI), 319–339 (IGGMLAVNLNAGFLGGIVAGF), 364–384 (VLILPLLSTAITGLIMVYVVG), 405–425 (NAVVLGLILGGMMAVDMGGPI), 428–450 (AAYTFAVGLLTSSTYAPMAAVMA), 477–497 (AGGAAAVLGLSFITEGAIPFA), 518–538 (LSMALGCLLVAPHGGIFVLAI), and 545–565 (LGLYALSIVVGTLVTTGLLIA).

The protein localises to the cell inner membrane. It carries out the reaction D-fructose(out) + N(pros)-phospho-L-histidyl-[protein] = D-fructose 1-phosphate(in) + L-histidyl-[protein]. Functionally, the phosphoenolpyruvate-dependent sugar phosphotransferase system (sugar PTS), a major carbohydrate active transport system, catalyzes the phosphorylation of incoming sugar substrates concomitantly with their translocation across the cell membrane. The enzyme II FruAB PTS system is involved in fructose transport. The protein is PTS system fructose-specific EIIB'BC component of Rhodobacter capsulatus (Rhodopseudomonas capsulata).